Consider the following 376-residue polypeptide: Multiphosphoryl transfer protein (376 aa).

The PTS EIIA type-2 domain occupies 2–142 (FQLSVQDIHP…EELRALLMGE (141 aa)). H62 acts as the Tele-phosphohistidine intermediate; for EIIA activity in catalysis. H62 is modified (phosphohistidine; by HPr). The interval 156 to 284 (TLDVIASSLV…LTSDDALTDD (129 aa)) is m domain. The 91-residue stretch at 285–375 (VLSAEFVVRN…DAIAAGLGEG (91 aa)) folds into the HPr domain. The active-site Pros-phosphohistidine intermediate; for HPr activity is the H299. H299 carries the phosphohistidine; by EI modification.

Its subcellular location is the cytoplasm. Its function is as follows. The phosphoenolpyruvate-dependent sugar phosphotransferase system (sugar PTS), a major carbohydrate active transport system, catalyzes the phosphorylation of incoming sugar substrates concomitantly with their translocation across the cell membrane. The enzyme II FruAB PTS system is involved in fructose transport. The chain is Multiphosphoryl transfer protein (fruB) from Salmonella typhimurium (strain LT2 / SGSC1412 / ATCC 700720).